The primary structure comprises 519 residues: Probable DNA ligase (519 aa).

Glu221 contacts ATP. Catalysis depends on Lys223, which acts as the N6-AMP-lysine intermediate. Residues Arg228, Arg243, Glu272, Phe312, Arg384, and Lys390 each contribute to the ATP site.

Belongs to the ATP-dependent DNA ligase family. The cofactor is Mg(2+).

It catalyses the reaction ATP + (deoxyribonucleotide)n-3'-hydroxyl + 5'-phospho-(deoxyribonucleotide)m = (deoxyribonucleotide)n+m + AMP + diphosphate.. DNA ligase that seals nicks in double-stranded DNA during DNA replication, DNA recombination and DNA repair. This is Probable DNA ligase from Mycolicibacterium paratuberculosis (strain ATCC BAA-968 / K-10) (Mycobacterium paratuberculosis).